Consider the following 875-residue polypeptide: Alanine--tRNA ligase (875 aa).

Zn(2+) contacts are provided by His596, His600, Cys700, and His704.

It belongs to the class-II aminoacyl-tRNA synthetase family. It depends on Zn(2+) as a cofactor.

It localises to the cytoplasm. The enzyme catalyses tRNA(Ala) + L-alanine + ATP = L-alanyl-tRNA(Ala) + AMP + diphosphate. Catalyzes the attachment of alanine to tRNA(Ala) in a two-step reaction: alanine is first activated by ATP to form Ala-AMP and then transferred to the acceptor end of tRNA(Ala). Also edits incorrectly charged Ser-tRNA(Ala) and Gly-tRNA(Ala) via its editing domain. This Methanocella arvoryzae (strain DSM 22066 / NBRC 105507 / MRE50) protein is Alanine--tRNA ligase.